A 494-amino-acid chain; its full sequence is Probable malate:quinone oxidoreductase (494 aa).

It belongs to the MQO family. FAD is required as a cofactor.

It carries out the reaction (S)-malate + a quinone = a quinol + oxaloacetate. It functions in the pathway carbohydrate metabolism; tricarboxylic acid cycle; oxaloacetate from (S)-malate (quinone route): step 1/1. The sequence is that of Probable malate:quinone oxidoreductase from Helicobacter hepaticus (strain ATCC 51449 / 3B1).